A 209-amino-acid polypeptide reads, in one-letter code: MTIKVLFVDDHEMVRIGISSYLSTQSDIEVVGEGASGKEAIAKAHELKPDLILMDLLMDDMDGVEATTQIKKDLPQIKVLMLTSFIEDKEVYRALDAGVDSYILKTTSAKDIADAVRKTSRGESVFEPEVLVKMRNRMKKRAELYEMLTEREMEILLLIAKGYSNQEIASASHITIKTVKTHVSNILSKLEVQDRTQAVIYAFQHNLIQ.

In terms of domain architecture, Response regulatory spans 4 to 120 (KVLFVDDHEM…DIADAVRKTS (117 aa)). Aspartate 55 bears the 4-aspartylphosphate mark. The region spanning 141-206 (RAELYEMLTE…QAVIYAFQHN (66 aa)) is the HTH luxR-type domain. A DNA-binding region (H-T-H motif) is located at residues 165–184 (NQEIASASHITIKTVKTHVS).

Homodimer. In terms of processing, phosphorylated by VraS. Phosphorylation state of VraR controls dimerization of the protein.

In terms of biological role, member of the two-component regulatory system VraS/VraR involved in the control of the cell wall peptidoglycan biosynthesis. Upon cellular stress, the histidine kinase VraS transfers the phosphoryl group onto VraR. Upon phosphorylation, VraR dimerizes at the N-terminal domain. In turn, phosphorylation-induced dimerization expand and enhance the VraR binding to its own promoter leading to increased expression and subsequent modulation of as many as 40 genes, which ultimately constitute the S.aureus response to cell wall damage. In addition, inhibits the host autophagic flux and delays the early stage of autophagosome formation, thereby promoting bacterial survival. Facilitates the ability of S.aureus to resist host polymorphonuclear leukocytes-mediated phagocytosis and killing thus contributing to immune evasion. The polypeptide is Response regulator protein VraR (vraR) (Staphylococcus aureus (strain NCTC 8325 / PS 47)).